Consider the following 239-residue polypeptide: Ubiquinone biosynthesis O-methyltransferase (239 aa).

Residues Arg42, Gly62, Asp83, and Met127 each contribute to the S-adenosyl-L-methionine site.

The protein belongs to the methyltransferase superfamily. UbiG/COQ3 family.

It catalyses the reaction a 3-demethylubiquinol + S-adenosyl-L-methionine = a ubiquinol + S-adenosyl-L-homocysteine + H(+). The catalysed reaction is a 3-(all-trans-polyprenyl)benzene-1,2-diol + S-adenosyl-L-methionine = a 2-methoxy-6-(all-trans-polyprenyl)phenol + S-adenosyl-L-homocysteine + H(+). It participates in cofactor biosynthesis; ubiquinone biosynthesis. Its function is as follows. O-methyltransferase that catalyzes the 2 O-methylation steps in the ubiquinone biosynthetic pathway. This chain is Ubiquinone biosynthesis O-methyltransferase, found in Pectobacterium carotovorum subsp. carotovorum (strain PC1).